The sequence spans 610 residues: UvrABC system protein C (610 aa).

The GIY-YIG domain occupies 19 to 97 (GAPGVYKMLD…IKRHKPRYNI (79 aa)). The region spanning 207-242 (EALIDRLAQRMEQAAQRLEFEKAARYRDQISNLRTV) is the UVR domain.

This sequence belongs to the UvrC family. Interacts with UvrB in an incision complex.

Its subcellular location is the cytoplasm. In terms of biological role, the UvrABC repair system catalyzes the recognition and processing of DNA lesions. UvrC both incises the 5' and 3' sides of the lesion. The N-terminal half is responsible for the 3' incision and the C-terminal half is responsible for the 5' incision. The chain is UvrABC system protein C from Methylococcus capsulatus (strain ATCC 33009 / NCIMB 11132 / Bath).